We begin with the raw amino-acid sequence, 723 residues long: Delta-like protein 1 (723 aa).

The N-terminal stretch at 1 to 17 (MGSRCALALAVLSALLC) is a signal peptide. The Extracellular portion of the chain corresponds to 18–545 (QVWSSGVFEL…LEGQGGPFPW (528 aa)). The DSL domain occupies 177-221 (FVCDEHYYGEGCSVFCRPRDDAFGHFTCGERGEKVCNPGWKGPYC). Intrachain disulfides connect C179–C188, C192–C204, C212–C221, C226–C237, C230–C243, C245–C254, C257–C268, C263–C274, C276–C285, C292–C304, C298–C314, C316–C325, C332–C343, C337–C352, C354–C363, C370–C381, C375–C391, C393–C402, C409–C420, C414–C429, C431–C440, C447–C458, C452–C467, C469–C478, C485–C496, C490–C505, and C507–C516. EGF-like domains follow at residues 226 to 254 (CLPG…GRYC), 257 to 285 (CIRY…GLFC), and 292 to 325 (CTHH…GATC). One can recognise an EGF-like 4; calcium-binding domain in the interval 332–363 (CDPSPCKNGGSCTDLENSYSCTCPPGFYGKIC). 2 consecutive EGF-like domains span residues 370–402 (CADG…GFNC) and 409–440 (CSSS…GRHC). Residues 447-478 (CASSPCANGGTCRDGVNDFSCTCPPGYTGRNC) enclose the EGF-like 7; calcium-binding domain. N-linked (GlcNAc...) asparagine glycosylation occurs at N477. An EGF-like 8 domain is found at 485–516 (CEHAPCHNGATCHERGHRYVCECARGYGGPNC). Residues 546–568 (VAVCAGVILVLMLLLGCAAVVVC) traverse the membrane as a helical segment. The Cytoplasmic segment spans residues 569-723 (VRLRLQKHRP…KDECVIATEV (155 aa)). Residue K613 forms a Glycyl lysine isopeptide (Lys-Gly) (interchain with G-Cter in ubiquitin) linkage. Residues 653-664 (AVRDAHSKRDTK) are compositionally biased toward basic and acidic residues. The disordered stretch occupies residues 653–702 (AVRDAHSKRDTKCQPQGSSGEEKGTPTTLRGGEASERKRPDSGCSTSKDT). At S694 the chain carries Phosphoserine; by PKB. S697 is modified (phosphoserine). The interval 720-723 (ATEV) is interaction with MAGI1.

As to quaternary structure, homodimer. Interacts with TJP1. Interacts with MAGI1 (via PDZ domain); forms a complex with CTNNB1 and CDH2 and promotes recruitment to the adherens junction and stabilization on the cell surface. Interacts with PSEN1; undergoes a presenilin-dependent gamma-secretase cleavage that releases a Dll1-intracellular form. Interacts with MFAP5. Interacts with MIB1. Interacts with NEURL1B; leads to ubiquitination. Interacts with NEURL1. Interacts with SYNJ2BP; enhances DLL1 protein stability, and promotes Notch signaling in endothelial cells. Interacts with MAGI1, MAGI2, MAGI3 and MPDZ. Interacts (via ubiquitin) with EPN1 (via IUM domain); binding with NOTCH1 attached to neighboring cell, promotes ligand ubiquitination and EPN1 interaction, leading to NECD transendocytosis and Notch signaling. Interacts with NOTCH1. Interacts with NOTCH2NLB; leading to promote Notch signaling pathway in a cell-autonomous manner through inhibition of cis DLL1-NOTCH2 interactions. In terms of processing, ubiquitinated by MIB (MIB1 or MIB2), leading to its endocytosis and subsequent degradation. Ubiquitinated; promotes recycling back to the plasma membrane and confers a strong affinity for NOTCH1. Multi-ubiquitination of Lys-613 by MIB1 promotes both cis and trans-interaction with NOTCH1, as well as activation of Notch signaling. Ubiquitinated by NEURL1B. Post-translationally, phosphorylated in a membrane association-dependent manner. Phosphorylation at Ser-697 requires the presence of Ser-694, whereas phosphorylation at Ser-694 occurs independently of the other site. Phosphorylation is required for full ligand activity in vitro and affects surface presentation, ectodomain shedding, and endocytosis. O-fucosylated. Can be elongated to a disaccharide by MFNG. As to expression, expressed in heart and pancreas, with lower expression in brain and muscle and almost no expression in placenta, lung, liver and kidney.

The protein resides in the apical cell membrane. It localises to the cell junction. It is found in the adherens junction. Its subcellular location is the membrane raft. Functionally, transmembrane ligand protein of NOTCH1, NOTCH2 and NOTCH3 receptors that binds the extracellular domain (ECD) of Notch receptor in a cis and trans fashion manner. Following transinteraction, ligand cells produce mechanical force that depends of a clathrin-mediated endocytosis, requiring ligand ubiquitination, EPN1 interaction, and actin polymerisation; these events promote Notch receptor extracellular domain (NECD) transendocytosis and triggers Notch signaling through induction of cleavage, hyperphosphorylation, and nuclear accumulation of the intracellular domain of Notch receptors (NICD). Is required for embryonic development and maintenance of adult stem cells in many different tissues and immune systeme; the DLL1-induced Notch signaling is mediated through an intercellular communication that regulates cell lineage, cell specification, cell patterning and morphogenesis through effects on differentiation and proliferation. Plays a role in brain development at different level, namely by regulating neuronal differentiation of neural precursor cells via cell-cell interaction, most likely through the lateral inhibitory system in an endogenous level dependent-manner. During neocortex development, Dll1-Notch signaling transmission is mediated by dynamic interactions between intermediate neurogenic progenitors and radial glia; the cell-cell interactions are mediated via dynamic and transient elongation processes, likely to reactivate/maintain Notch activity in neighboring progenitors, and coordinate progenitor cell division and differentiation across radial and zonal boundaries. During cerebellar development, regulates Bergmann glial monolayer formation and its morphological maturation through a Notch signaling pathway. At the retina and spinal cord level, regulates neurogenesis by preventing the premature differentiation of neural progenitors and also by maintaining progenitors in spinal cord through Notch signaling pathway. Also controls neurogenesis of the neural tube in a progenitor domain-specific fashion along the dorsoventral axis. Maintains quiescence of neural stem cells and plays a role as a fate determinant that segregates asymmetrically to one daughter cell during neural stem cells mitosis, resulting in neuronal differentiation in Dll1-inheriting cell. Plays a role in immune systeme development, namely the development of all T-cells and marginal zone (MZ) B-cells. Blocks the differentiation of progenitor cells into the B-cell lineage while promoting the emergence of a population of cells with the characteristics of a T-cell/NK-cell precursor. Also plays a role during muscle development. During early development, inhibits myoblasts differentiation from the medial dermomyotomal lip and later regulates progenitor cell differentiation. Directly modulates cell adhesion and basal lamina formation in satellite cells through Notch signaling. Maintains myogenic progenitors pool by suppressing differentiation through down-regulation of MYOD1 and is required for satellite cell homing and PAX7 expression. During craniofacial and trunk myogenesis suppresses differentiation of cranial mesoderm-derived and somite-derived muscle via MYOD1 regulation but in cranial mesoderm-derived progenitors, is neither required for satellite cell homing nor for PAX7 expression. Also plays a role during pancreatic cell development. During type B pancreatic cell development, may be involved in the initiation of proximodistal patterning in the early pancreatic epithelium. Stimulates multipotent pancreatic progenitor cells proliferation and pancreatic growth by maintaining HES1 expression and PTF1A protein levels. During fetal stages of development, is required to maintain arterial identity and the responsiveness of arterial endothelial cells for VEGFA through regulation of KDR activation and NRP1 expression. Controls sprouting angiogenesis and subsequent vertical branch formation through regulation on tip cell differentiation. Negatively regulates goblet cell differentiation in intestine and controls secretory fat commitment through lateral inhibition in small intestine. Plays a role during inner ear development; negatively regulates auditory hair cell differentiation. Plays a role during nephron development through Notch signaling pathway. Regulates growth, blood pressure and energy homeostasis. The polypeptide is Delta-like protein 1 (Homo sapiens (Human)).